We begin with the raw amino-acid sequence, 446 residues long: Glucosylglycerate hydrolase (446 aa).

Residues tyrosine 36, 40 to 43 (WSWD), tyrosine 88, glutamine 115, and glycine 180 each bind substrate. Aspartate 182 acts as the Proton donor in catalysis. Residues arginine 216 and 375–376 (YW) contribute to the substrate site. Catalysis depends on glutamate 419, which acts as the Proton acceptor. Position 434 (glutamine 434) interacts with substrate.

It belongs to the glycosyl hydrolase 63 family. As to quaternary structure, homotetramer. Dimer of dimers.

It catalyses the reaction (2R)-2-O-(alpha-D-glucopyranosyl)-glycerate + H2O = (R)-glycerate + D-glucose. Its activity is regulated as follows. Activity is not dependent on divalent cations, but it is enhanced by Mg(2+). Functionally, catalyzes the hydrolysis of glucosylglycerate (GG) to glycerate and glucose. Involved in recovery from nitrogen starvation by promoting the rapid mobilization of the glucosylglycerate that accumulates under these conditions. Can also hydrolyze mannosylglycerate (MG), with tenfold lower efficiency. The sequence is that of Glucosylglycerate hydrolase from Mycolicibacterium hassiacum (strain DSM 44199 / CIP 105218 / JCM 12690 / 3849) (Mycobacterium hassiacum).